The chain runs to 225 residues: Urease accessory protein UreG 2 (225 aa).

Position 31-38 (31-38 (GPVGSGKT)) interacts with GTP.

It belongs to the SIMIBI class G3E GTPase family. UreG subfamily. In terms of assembly, homodimer. UreD, UreF and UreG form a complex that acts as a GTP-hydrolysis-dependent molecular chaperone, activating the urease apoprotein by helping to assemble the nickel containing metallocenter of UreC. The UreE protein probably delivers the nickel.

The protein resides in the cytoplasm. Functionally, facilitates the functional incorporation of the urease nickel metallocenter. This process requires GTP hydrolysis, probably effectuated by UreG. The chain is Urease accessory protein UreG 2 from Streptomyces griseus subsp. griseus (strain JCM 4626 / CBS 651.72 / NBRC 13350 / KCC S-0626 / ISP 5235).